A 264-amino-acid chain; its full sequence is Thymidylate synthase (264 aa).

DUMP is bound at residue arginine 21. (6R)-5,10-methylene-5,6,7,8-tetrahydrofolate is bound at residue histidine 51. 126-127 (RR) is a dUMP binding site. Catalysis depends on cysteine 146, which acts as the Nucleophile. Residues 166 to 169 (RSVD), asparagine 177, and 207 to 209 (HLY) each bind dUMP. A (6R)-5,10-methylene-5,6,7,8-tetrahydrofolate-binding site is contributed by aspartate 169. A (6R)-5,10-methylene-5,6,7,8-tetrahydrofolate-binding site is contributed by alanine 263.

This sequence belongs to the thymidylate synthase family. Bacterial-type ThyA subfamily. As to quaternary structure, homodimer.

Its subcellular location is the cytoplasm. The enzyme catalyses dUMP + (6R)-5,10-methylene-5,6,7,8-tetrahydrofolate = 7,8-dihydrofolate + dTMP. Its pathway is pyrimidine metabolism; dTTP biosynthesis. Catalyzes the reductive methylation of 2'-deoxyuridine-5'-monophosphate (dUMP) to 2'-deoxythymidine-5'-monophosphate (dTMP) while utilizing 5,10-methylenetetrahydrofolate (mTHF) as the methyl donor and reductant in the reaction, yielding dihydrofolate (DHF) as a by-product. This enzymatic reaction provides an intracellular de novo source of dTMP, an essential precursor for DNA biosynthesis. The polypeptide is Thymidylate synthase (Geobacillus sp. (strain WCH70)).